Here is a 552-residue protein sequence, read N- to C-terminus: 4-coumarate--CoA ligase-like 3 (552 aa).

The ATP site is built by Ser207, Ser208, Gly209, Thr210, Thr211, and Lys215. A (E)-4-coumaroyl-AMP-binding site is contributed by Phe252. Arg273 provides a ligand contact to CoA. The SBD1 stretch occupies residues 275-346 (GLDDMMQAVE…EKYPTVNIFQ (72 aa)). (E)-4-coumaroyl-AMP-binding residues include Gly324, Gln346, Gly347, and Thr351. Residues Gln346, Gly347, Thr351, Asp432, and Arg447 each coordinate ATP. Positions 347–411 (GYALTESHGS…LKGPSISKGY (65 aa)) are SBD2. (E)-4-coumaroyl-AMP is bound by residues Lys449 and Lys453. 2 residues coordinate CoA: Lys455 and Gly456. Lys538 serves as a coordination point for ATP. The Microbody targeting signal signature appears at 550-552 (SKL).

The protein belongs to the ATP-dependent AMP-binding enzyme family. Requires Mg(2+) as cofactor.

The protein localises to the peroxisome. The catalysed reaction is (E)-4-coumarate + ATP + CoA = (E)-4-coumaroyl-CoA + AMP + diphosphate. The enzyme catalyses (E)-4-coumarate + ATP + H(+) = (E)-4-coumaroyl-AMP + diphosphate. It catalyses the reaction (E)-4-coumaroyl-AMP + CoA = (E)-4-coumaroyl-CoA + AMP + H(+). Functionally, carboxylate--CoA ligase that may use 4-coumarate as substrate. Follows a two-step reaction mechanism, wherein the carboxylate substrate first undergoes adenylation by ATP, followed by a thioesterification in the presence of CoA to yield the final CoA thioester. The protein is 4-coumarate--CoA ligase-like 3 of Arabidopsis thaliana (Mouse-ear cress).